The following is a 119-amino-acid chain: Ribonuclease P protein component (119 aa).

It belongs to the RnpA family. As to quaternary structure, consists of a catalytic RNA component (M1 or rnpB) and a protein subunit.

The enzyme catalyses Endonucleolytic cleavage of RNA, removing 5'-extranucleotides from tRNA precursor.. RNaseP catalyzes the removal of the 5'-leader sequence from pre-tRNA to produce the mature 5'-terminus. It can also cleave other RNA substrates such as 4.5S RNA. The protein component plays an auxiliary but essential role in vivo by binding to the 5'-leader sequence and broadening the substrate specificity of the ribozyme. The protein is Ribonuclease P protein component of Pasteurella multocida (strain Pm70).